The chain runs to 301 residues: Phosphate butyryltransferase (301 aa).

Belongs to the phosphate acetyltransferase and butyryltransferase family.

The catalysed reaction is butanoyl-CoA + phosphate = butanoyl phosphate + CoA. Its pathway is lipid metabolism; butanoate metabolism. Functionally, catalyzes the conversion of butyryl-CoA through butyryl phosphate to butyrate. The chain is Phosphate butyryltransferase (ptb) from Clostridium acetobutylicum (strain ATCC 824 / DSM 792 / JCM 1419 / IAM 19013 / LMG 5710 / NBRC 13948 / NRRL B-527 / VKM B-1787 / 2291 / W).